The sequence spans 473 residues: Photosystem II CP43 reaction center protein (473 aa).

A propeptide spanning residues 1-14 (MKTLYSLRRFYPVE) is cleaved from the precursor. Residue Thr15 is modified to N-acetylthreonine. Thr15 carries the post-translational modification Phosphothreonine. 5 helical membrane passes run 69 to 93 (LFEV…PHLA), 134 to 155 (LLGP…KDRN), 178 to 200 (KALY…RKIT), 255 to 275 (KPFA…LSYS), and 291 to 312 (WFNN…ASQA). Residue Glu367 coordinates [CaMn4O5] cluster. A helical membrane pass occupies residues 447-471 (RARAAAAGFEKGIDRDFEPVLSMTP).

It belongs to the PsbB/PsbC family. PsbC subfamily. PSII is composed of 1 copy each of membrane proteins PsbA, PsbB, PsbC, PsbD, PsbE, PsbF, PsbH, PsbI, PsbJ, PsbK, PsbL, PsbM, PsbT, PsbX, PsbY, PsbZ, Psb30/Ycf12, at least 3 peripheral proteins of the oxygen-evolving complex and a large number of cofactors. It forms dimeric complexes. Requires Binds multiple chlorophylls and provides some of the ligands for the Ca-4Mn-5O cluster of the oxygen-evolving complex. It may also provide a ligand for a Cl- that is required for oxygen evolution. PSII binds additional chlorophylls, carotenoids and specific lipids. as cofactor.

Its subcellular location is the plastid. It localises to the chloroplast thylakoid membrane. Its function is as follows. One of the components of the core complex of photosystem II (PSII). It binds chlorophyll and helps catalyze the primary light-induced photochemical processes of PSII. PSII is a light-driven water:plastoquinone oxidoreductase, using light energy to abstract electrons from H(2)O, generating O(2) and a proton gradient subsequently used for ATP formation. This Morus indica (Mulberry) protein is Photosystem II CP43 reaction center protein.